Reading from the N-terminus, the 93-residue chain is Long neurotoxin 2 (93 aa).

Positions 1 to 21 (MKILLLTLVVVTIVCLDLAYT) are cleaved as a signal peptide. Intrachain disulfides connect cysteine 24-cysteine 42, cysteine 35-cysteine 63, cysteine 48-cysteine 52, cysteine 67-cysteine 78, and cysteine 79-cysteine 84.

The protein belongs to the three-finger toxin family. Long-chain subfamily. Type II alpha-neurotoxin sub-subfamily. Expressed by the venom gland.

Its subcellular location is the secreted. In terms of biological role, binds with high affinity to muscular (alpha-1/CHRNA1) and neuronal (alpha-7/CHRNA7) nicotinic acetylcholine receptor (nAChR) and inhibits acetylcholine from binding to the receptor, thereby impairing neuromuscular and neuronal transmission. This Hydrophis hardwickii (Hardwick's spine-bellied seasnake) protein is Long neurotoxin 2.